A 264-amino-acid polypeptide reads, in one-letter code: Proliferating cell nuclear antigen (264 aa).

Residues 61 to 80 mediate DNA binding; the sequence is RCDRNISMGMNLGNMAKMLK.

The protein belongs to the PCNA family.

It is found in the nucleus. Its function is as follows. This protein is an auxiliary protein of DNA polymerase delta and is involved in the control of eukaryotic DNA replication by increasing the polymerase's processibility during elongation of the leading strand. The polypeptide is Proliferating cell nuclear antigen (Daucus carota (Wild carrot)).